Here is a 154-residue protein sequence, read N- to C-terminus: MGLSDGEWQLVLNVWGKVEADIPGHGQEVLIRLFKGHPETLEKFDKFKHLKSEDEMKASEDLKKHGATVLTALGGILKKKGHHEAEIKPLAQSHATKHKIPVKYLEFISECIIQVLHSKHPGDFGADAQGAMNKALELFRKDMASNYKELGFQG.

The Globin domain occupies 2–148 (GLSDGEWQLV…FRKDMASNYK (147 aa)). Residue S4 is modified to Phosphoserine. H65 contacts nitrite. An O2-binding site is contributed by H65. T68 is modified (phosphothreonine). H94 is a heme b binding site.

Belongs to the globin family. As to quaternary structure, monomeric.

Its subcellular location is the cytoplasm. The protein localises to the sarcoplasm. It catalyses the reaction Fe(III)-heme b-[protein] + nitric oxide + H2O = Fe(II)-heme b-[protein] + nitrite + 2 H(+). The enzyme catalyses H2O2 + AH2 = A + 2 H2O. Its function is as follows. Monomeric heme protein which primary function is to store oxygen and facilitate its diffusion within muscle tissues. Reversibly binds oxygen through a pentacoordinated heme iron and enables its timely and efficient release as needed during periods of heightened demand. Depending on the oxidative conditions of tissues and cells, and in addition to its ability to bind oxygen, it also has a nitrite reductase activity whereby it regulates the production of bioactive nitric oxide. Under stress conditions, like hypoxia and anoxia, it also protects cells against reactive oxygen species thanks to its pseudoperoxidase activity. The polypeptide is Myoglobin (MB) (Pan troglodytes (Chimpanzee)).